We begin with the raw amino-acid sequence, 101 residues long: Small ribosomal subunit protein uS17 (101 aa).

This sequence belongs to the universal ribosomal protein uS17 family. As to quaternary structure, part of the 30S ribosomal subunit.

In terms of biological role, one of the primary rRNA binding proteins, it binds specifically to the 5'-end of 16S ribosomal RNA. This is Small ribosomal subunit protein uS17 from Leifsonia xyli subsp. xyli (strain CTCB07).